The following is a 315-amino-acid chain: PIH1 domain-containing protein 2 (315 aa).

Belongs to the PIH1 family.

In Mus musculus (Mouse), this protein is PIH1 domain-containing protein 2 (Pih1d2).